Reading from the N-terminus, the 164-residue chain is uncharacterized protein (164 aa).

2 CBS domains span residues 9 to 66 (ATTK…DIDS) and 72 to 128 (MTKD…VHTM).

This is an uncharacterized protein from Acidianus ambivalens (Desulfurolobus ambivalens).